The chain runs to 395 residues: Fe(3+) ions import ATP-binding protein FbpC 2 (395 aa).

Positions 1–21 (MHIAQELADETCNSPRGAGHA) are disordered. The ABC transporter domain maps to 23–264 (LRYPSDRRTA…PKTLFVADFI (242 aa)). ATP is bound at residue 66–73 (GPSGCGKT).

It belongs to the ABC transporter superfamily. Fe(3+) ion importer (TC 3.A.1.10) family. The complex is composed of two ATP-binding proteins (FbpC), two transmembrane proteins (FbpB) and a solute-binding protein (FbpA).

It localises to the cell inner membrane. It carries out the reaction Fe(3+)(out) + ATP + H2O = Fe(3+)(in) + ADP + phosphate + H(+). Part of the ABC transporter complex FbpABC involved in Fe(3+) ions import. Responsible for energy coupling to the transport system. The protein is Fe(3+) ions import ATP-binding protein FbpC 2 of Rhizobium meliloti (strain 1021) (Ensifer meliloti).